The primary structure comprises 246 residues: Neuromodulin (246 aa).

The interval M1 to A246 is disordered. Residues C3 and C4 are each lipidated (S-palmitoyl cysteine). A compositionally biased stretch (basic and acidic residues) spans K9–H33. The 30-residue stretch at A32–P61 folds into the IQ domain. 2 stretches are compositionally biased toward low complexity: residues A87 to A99 and S125 to T157. Over residues K164 to Q176 the composition is skewed to basic and acidic residues. Residues A177–P203 show a composition bias toward low complexity. 2 stretches are compositionally biased toward basic and acidic residues: residues T213 to P225 and E237 to A246.

It belongs to the neuromodulin family. In terms of assembly, binds calmodulin with a greater affinity in the absence of Ca(2+) than in its presence. Palmitoylated. Palmitoylation is essential for plasma membrane association. As to expression, expressed in neurons.

Its subcellular location is the cell membrane. The protein resides in the cell projection. It localises to the growth cone membrane. The protein localises to the synapse. It is found in the filopodium membrane. Functionally, this protein is associated with nerve growth. It is a major component of the motile 'growth cones' that form the tips of elongating axons. Plays a role in axonal and dendritic filopodia induction. The protein is Neuromodulin (GAP43) of Gallus gallus (Chicken).